Reading from the N-terminus, the 413-residue chain is E3 ubiquitin-protein ligase makorin (413 aa).

2 C3H1-type zinc fingers span residues 2-29 (PRHE…HDVA) and 30-57 (TRNE…HTRP). The tract at residues 61-85 (ELPSCSTPQTSQNQQNLQNSGQRVR) is disordered. Low complexity predominate over residues 66-82 (STPQTSQNQQNLQNSGQ). A C3H1-type 3 zinc finger spans residues 138-167 (QAQLMMCPYHQKSGDCNRQDMDCPFAHGNY). The RING-type zinc-finger motif lies at 213 to 267 (CGICMENIFEKNLRFGILNGCQHCFCLDCIRQWRSKDQENVELATKTVRSCPECR). A C3H1-type 4 zinc finger spans residues 296 to 327 (NTKRKICKYYSNERSRGACPFGNKCFYKHQLP).

Component of a complex at least containing lep-2, lin-28 and the long non-coding RNA lep-5, which mediates the degradation of lin-28. As to expression, expressed in seam, tail tip, and other hypodermal cells, head and tail neurons, the pharynx, intestine and the developing hermaphrodite somatic gonad. Not expressed in body wall muscle cells.

The protein localises to the cytoplasm. It carries out the reaction S-ubiquitinyl-[E2 ubiquitin-conjugating enzyme]-L-cysteine + [acceptor protein]-L-lysine = [E2 ubiquitin-conjugating enzyme]-L-cysteine + N(6)-ubiquitinyl-[acceptor protein]-L-lysine.. It functions in the pathway protein modification; protein ubiquitination. In terms of biological role, E3 ubiquitin ligase which catalyzes the covalent attachment of ubiquitin moieties onto substrate proteins. Promotes the larval to adult transition by binding to the long non-coding RNA lep-5 to target the heterochronic protein lin-28 for degradation by the proteasome. This association and degradation of lin-28 also controls the timing of the sexual differentiation of individual neurons in males including the AIM, AWA, ADF, ASJ and CEM neurons. Plays a role in governing the developmental timing of male tail tip morphogenesis. Plays a role in two aspects of male mating behavior: response to hermaphrodite contact and vulva location. May play a role in the detection of preferred food sources. The sequence is that of E3 ubiquitin-protein ligase makorin from Caenorhabditis elegans.